Here is a 138-residue protein sequence, read N- to C-terminus: MRHARGYRRLNRTHEHRKAMFSNMCGSLIEHEQIKTTVPKAKELRPIIEKMITLAKRGDLHARRQAASQLKQDKDVAKLFEVLGPRYAERQGGYVRIMKAGFRYGDMAPMAIIEFVDRDVDAKGAADRARVEAEADAE.

Belongs to the bacterial ribosomal protein bL17 family. As to quaternary structure, part of the 50S ribosomal subunit. Contacts protein L32.

The polypeptide is Large ribosomal subunit protein bL17 (Jannaschia sp. (strain CCS1)).